A 132-amino-acid polypeptide reads, in one-letter code: Phosphoribosyl-AMP cyclohydrolase (132 aa).

Asp86 is a Mg(2+) binding site. A Zn(2+)-binding site is contributed by Cys87. Residues Asp88 and Asp90 each coordinate Mg(2+). Zn(2+) is bound by residues Cys103 and Cys110.

Belongs to the PRA-CH family. Homodimer. It depends on Mg(2+) as a cofactor. Requires Zn(2+) as cofactor.

It is found in the cytoplasm. It carries out the reaction 1-(5-phospho-beta-D-ribosyl)-5'-AMP + H2O = 1-(5-phospho-beta-D-ribosyl)-5-[(5-phospho-beta-D-ribosylamino)methylideneamino]imidazole-4-carboxamide. It participates in amino-acid biosynthesis; L-histidine biosynthesis; L-histidine from 5-phospho-alpha-D-ribose 1-diphosphate: step 3/9. Functionally, catalyzes the hydrolysis of the adenine ring of phosphoribosyl-AMP. The protein is Phosphoribosyl-AMP cyclohydrolase of Clavibacter michiganensis subsp. michiganensis (strain NCPPB 382).